Here is a 95-residue protein sequence, read N- to C-terminus: Secreted RxLR effector protein 20 (95 aa).

Positions 1-20 (MQSPYIILFALVTLLGSISG) are cleaved as a signal peptide. Positions 47–50 (RLLR) match the RxLR motif.

Belongs to the RxLR effector family.

It localises to the secreted. The protein resides in the host nucleus. The protein localises to the host cytoplasm. In terms of biological role, secreted effector that partially suppresses the host cell death induced by cell death-inducing proteins. This Plasmopara viticola (Downy mildew of grapevine) protein is Secreted RxLR effector protein 20.